The sequence spans 502 residues: ATP synthase subunit alpha (502 aa).

The interval 115–134 (IDGQGPINTTKTRPVEQKAT) is disordered. 169-176 (GDRQTGKT) contacts ATP.

This sequence belongs to the ATPase alpha/beta chains family. As to quaternary structure, F-type ATPases have 2 components, CF(1) - the catalytic core - and CF(0) - the membrane proton channel. CF(1) has five subunits: alpha(3), beta(3), gamma(1), delta(1), epsilon(1). CF(0) has three main subunits: a(1), b(2) and c(9-12). The alpha and beta chains form an alternating ring which encloses part of the gamma chain. CF(1) is attached to CF(0) by a central stalk formed by the gamma and epsilon chains, while a peripheral stalk is formed by the delta and b chains.

It localises to the cell membrane. The catalysed reaction is ATP + H2O + 4 H(+)(in) = ADP + phosphate + 5 H(+)(out). Produces ATP from ADP in the presence of a proton gradient across the membrane. The alpha chain is a regulatory subunit. The protein is ATP synthase subunit alpha of Staphylococcus haemolyticus (strain JCSC1435).